A 276-amino-acid polypeptide reads, in one-letter code: Bis(5'-nucleosyl)-tetraphosphatase, symmetrical (276 aa).

Belongs to the Ap4A hydrolase family.

The enzyme catalyses P(1),P(4)-bis(5'-adenosyl) tetraphosphate + H2O = 2 ADP + 2 H(+). Its function is as follows. Hydrolyzes diadenosine 5',5'''-P1,P4-tetraphosphate to yield ADP. This is Bis(5'-nucleosyl)-tetraphosphatase, symmetrical from Psychromonas ingrahamii (strain DSM 17664 / CCUG 51855 / 37).